We begin with the raw amino-acid sequence, 276 residues long: Ribosomal RNA small subunit methyltransferase A (276 aa).

S-adenosyl-L-methionine-binding residues include Asn27, Leu29, Gly54, Glu75, Asp101, and Asn122.

It belongs to the class I-like SAM-binding methyltransferase superfamily. rRNA adenine N(6)-methyltransferase family. RsmA subfamily.

The protein resides in the cytoplasm. The catalysed reaction is adenosine(1518)/adenosine(1519) in 16S rRNA + 4 S-adenosyl-L-methionine = N(6)-dimethyladenosine(1518)/N(6)-dimethyladenosine(1519) in 16S rRNA + 4 S-adenosyl-L-homocysteine + 4 H(+). Specifically dimethylates two adjacent adenosines (A1518 and A1519) in the loop of a conserved hairpin near the 3'-end of 16S rRNA in the 30S particle. May play a critical role in biogenesis of 30S subunits. The protein is Ribosomal RNA small subunit methyltransferase A of Brucella abortus biovar 1 (strain 9-941).